The following is a 194-amino-acid chain: 22 kDa relaxation protein (194 aa).

This protein is probably required for relaxation complex formation. In Salmonella typhimurium, this protein is 22 kDa relaxation protein.